The sequence spans 464 residues: NADH-ubiquinone oxidoreductase chain 4 (464 aa).

Transmembrane regions (helical) follow at residues M1 to Q21, S63 to S83, F98 to L118, L119 to W139, F152 to I172, I197 to L217, P227 to I247, L261 to V281, A288 to S308, N314 to A334, I355 to P375, L389 to I409, and L443 to L463.

It belongs to the complex I subunit 4 family.

The protein localises to the mitochondrion membrane. It catalyses the reaction a ubiquinone + NADH + 5 H(+)(in) = a ubiquinol + NAD(+) + 4 H(+)(out). Its function is as follows. Core subunit of the mitochondrial membrane respiratory chain NADH dehydrogenase (Complex I) that is believed to belong to the minimal assembly required for catalysis. Complex I functions in the transfer of electrons from NADH to the respiratory chain. The immediate electron acceptor for the enzyme is believed to be ubiquinone. The sequence is that of NADH-ubiquinone oxidoreductase chain 4 (ND4) from Paracentrotus lividus (Common sea urchin).